The primary structure comprises 539 residues: uncharacterized protein (539 aa).

Disordered stretches follow at residues 179–203 and 433–459; these read SDELLPDTGEDSDEDGHNHGGHSHG and AQASARAQARAARRGRSAAKARGHRDE. Positions 182 to 192 are enriched in acidic residues; sequence LLPDTGEDSDE. Residues 433 to 442 show a composition bias toward low complexity; it reads AQASARAQAR. Positions 443–455 are enriched in basic residues; the sequence is AARRGRSAAKARG.

It belongs to the mycobacterial PPE family.

It is found in the secreted. This is an uncharacterized protein from Mycobacterium tuberculosis (strain CDC 1551 / Oshkosh).